The chain runs to 439 residues: 3-phosphoshikimate 1-carboxyvinyltransferase (439 aa).

3-phosphoshikimate-binding residues include Lys-29 and Arg-34. Lys-29 is a binding site for phosphoenolpyruvate. 2 residues coordinate phosphoenolpyruvate: Gly-99 and Arg-128. 3-phosphoshikimate is bound by residues Ser-171, Ser-172, Gln-173, Ser-199, Asp-316, and Lys-343. Gln-173 provides a ligand contact to phosphoenolpyruvate. Catalysis depends on Asp-316, which acts as the Proton acceptor. Positions 347, 390, and 416 each coordinate phosphoenolpyruvate.

The protein belongs to the EPSP synthase family. As to quaternary structure, monomer.

The protein localises to the cytoplasm. It catalyses the reaction 3-phosphoshikimate + phosphoenolpyruvate = 5-O-(1-carboxyvinyl)-3-phosphoshikimate + phosphate. It functions in the pathway metabolic intermediate biosynthesis; chorismate biosynthesis; chorismate from D-erythrose 4-phosphate and phosphoenolpyruvate: step 6/7. Catalyzes the transfer of the enolpyruvyl moiety of phosphoenolpyruvate (PEP) to the 5-hydroxyl of shikimate-3-phosphate (S3P) to produce enolpyruvyl shikimate-3-phosphate and inorganic phosphate. The protein is 3-phosphoshikimate 1-carboxyvinyltransferase of Deinococcus radiodurans (strain ATCC 13939 / DSM 20539 / JCM 16871 / CCUG 27074 / LMG 4051 / NBRC 15346 / NCIMB 9279 / VKM B-1422 / R1).